A 133-amino-acid polypeptide reads, in one-letter code: Small ribosomal subunit protein uS8 (133 aa).

It belongs to the universal ribosomal protein uS8 family. Part of the 30S ribosomal subunit. Contacts proteins S5 and S12.

Functionally, one of the primary rRNA binding proteins, it binds directly to 16S rRNA central domain where it helps coordinate assembly of the platform of the 30S subunit. The chain is Small ribosomal subunit protein uS8 from Chlamydia caviae (strain ATCC VR-813 / DSM 19441 / 03DC25 / GPIC) (Chlamydophila caviae).